Consider the following 295-residue polypeptide: ATP synthase gamma chain (295 aa).

This sequence belongs to the ATPase gamma chain family. As to quaternary structure, F-type ATPases have 2 components, CF(1) - the catalytic core - and CF(0) - the membrane proton channel. CF(1) has five subunits: alpha(3), beta(3), gamma(1), delta(1), epsilon(1). CF(0) has three main subunits: a, b and c.

The protein resides in the cell inner membrane. Its function is as follows. Produces ATP from ADP in the presence of a proton gradient across the membrane. The gamma chain is believed to be important in regulating ATPase activity and the flow of protons through the CF(0) complex. This is ATP synthase gamma chain from Campylobacter fetus subsp. fetus (strain 82-40).